The chain runs to 190 residues: Iron-sulfur assembly protein 1 (190 aa).

The segment at 49-71 is disordered; that stretch reads PSLKPSAAGSGSTAPKPVTEREI. Positions 116, 180, and 182 each coordinate Fe cation.

The protein belongs to the HesB/IscA family.

Its subcellular location is the mitochondrion matrix. Functionally, involved in the assembly of mitochondrial and cytoplasmic iron-sulfur proteins. Probably involved in the binding of an intermediate of Fe/S cluster assembly. The chain is Iron-sulfur assembly protein 1 (isa1) from Schizosaccharomyces pombe (strain 972 / ATCC 24843) (Fission yeast).